The sequence spans 431 residues: Serine--tRNA ligase (431 aa).

An L-serine-binding site is contributed by 235–237 (TAE). ATP contacts are provided by residues 266 to 268 (RRE) and Val282. Glu289 is a binding site for L-serine. Position 353–356 (353–356 (EASS)) interacts with ATP. Ser389 contacts L-serine.

Belongs to the class-II aminoacyl-tRNA synthetase family. Type-1 seryl-tRNA synthetase subfamily. As to quaternary structure, homodimer. The tRNA molecule binds across the dimer.

The protein resides in the cytoplasm. The enzyme catalyses tRNA(Ser) + L-serine + ATP = L-seryl-tRNA(Ser) + AMP + diphosphate + H(+). It catalyses the reaction tRNA(Sec) + L-serine + ATP = L-seryl-tRNA(Sec) + AMP + diphosphate + H(+). It participates in aminoacyl-tRNA biosynthesis; selenocysteinyl-tRNA(Sec) biosynthesis; L-seryl-tRNA(Sec) from L-serine and tRNA(Sec): step 1/1. Catalyzes the attachment of serine to tRNA(Ser). Is also able to aminoacylate tRNA(Sec) with serine, to form the misacylated tRNA L-seryl-tRNA(Sec), which will be further converted into selenocysteinyl-tRNA(Sec). This is Serine--tRNA ligase from Prosthecochloris aestuarii (strain DSM 271 / SK 413).